Consider the following 473-residue polypeptide: Mediator of RNA polymerase II transcription subunit 29 (473 aa).

Residues Met1 to Pro12 are compositionally biased toward polar residues. Disordered stretches follow at residues Met1–Gln319 and Ser444–Glu473. Low complexity predominate over residues Gln13 to Gln50. The span at Ser51–Gln62 shows a compositional bias: polar residues. Low complexity-rich tracts occupy residues Gln111–Met123 and Val130–Pro139. Composition is skewed to polar residues over residues Thr148–His183 and Pro255–Ser269. Low complexity-rich tracts occupy residues Ala272–Ala286 and Ala294–Ala308.

The protein belongs to the Mediator complex subunit 29 family. As to quaternary structure, component of the Mediator complex.

It localises to the nucleus. Component of the Mediator complex, a coactivator involved in the regulated transcription of nearly all RNA polymerase II-dependent genes. Mediator functions as a bridge to convey information from gene-specific regulatory proteins to the basal RNA polymerase II transcription machinery. Mediator is recruited to promoters by direct interactions with regulatory proteins and serves as a scaffold for the assembly of a functional preinitiation complex with RNA polymerase II and the general transcription factors. The protein is Mediator of RNA polymerase II transcription subunit 29 (mdt-29) of Caenorhabditis briggsae.